We begin with the raw amino-acid sequence, 650 residues long: 1-deoxy-D-xylulose-5-phosphate synthase (650 aa).

A compositionally biased stretch (basic and acidic residues) spans 1–13; sequence MSKIKNDKRETGH. Residues 1–23 form a disordered region; it reads MSKIKNDKRETGHLKSPPETPLL. Thiamine diphosphate-binding positions include H92 and 133–135; that span reads AHS. Residue D164 coordinates Mg(2+). Thiamine diphosphate-binding positions include 165–166, N193, Y302, and E384; that span reads GA. Mg(2+) is bound at residue N193.

This sequence belongs to the transketolase family. DXPS subfamily. As to quaternary structure, homodimer. Requires Mg(2+) as cofactor. Thiamine diphosphate is required as a cofactor.

The catalysed reaction is D-glyceraldehyde 3-phosphate + pyruvate + H(+) = 1-deoxy-D-xylulose 5-phosphate + CO2. It functions in the pathway metabolic intermediate biosynthesis; 1-deoxy-D-xylulose 5-phosphate biosynthesis; 1-deoxy-D-xylulose 5-phosphate from D-glyceraldehyde 3-phosphate and pyruvate: step 1/1. Catalyzes the acyloin condensation reaction between C atoms 2 and 3 of pyruvate and glyceraldehyde 3-phosphate to yield 1-deoxy-D-xylulose-5-phosphate (DXP). The protein is 1-deoxy-D-xylulose-5-phosphate synthase of Chelativorans sp. (strain BNC1).